The primary structure comprises 391 residues: Phosphatidate cytidylyltransferase 4, chloroplastic (391 aa).

A chloroplast-targeting transit peptide spans methionine 1 to valine 61. A run of 6 helical transmembrane segments spans residues isoleucine 102–phenylalanine 122, phenylalanine 175–valine 195, phenylalanine 202–tryptophan 222, valine 254–phenylalanine 274, isoleucine 298–proline 318, and leucine 321–threonine 341.

It belongs to the CDS family. It depends on Mg(2+) as a cofactor.

The protein resides in the plastid. The protein localises to the chloroplast membrane. The catalysed reaction is a 1,2-diacyl-sn-glycero-3-phosphate + CTP + H(+) = a CDP-1,2-diacyl-sn-glycerol + diphosphate. It participates in phospholipid metabolism; CDP-diacylglycerol biosynthesis; CDP-diacylglycerol from sn-glycerol 3-phosphate: step 3/3. Its activity is regulated as follows. Highest activities is obtained at about 30 mM CTP and 2 mM phosphatidic acid (PA). Its function is as follows. May be involved in the synthesis of minor phospholipids and in modulation of IP3-mediated signal transduction. Promotes the biosynthesis of plastidial phosphatidylglycerol (PG) which is required for structure and function of thylakoid membranes and, hence, for photoautotrophic growth. The sequence is that of Phosphatidate cytidylyltransferase 4, chloroplastic from Arabidopsis thaliana (Mouse-ear cress).